An 887-amino-acid polypeptide reads, in one-letter code: Alanine--tRNA ligase (887 aa).

His564, His568, Cys676, and His680 together coordinate Zn(2+).

It belongs to the class-II aminoacyl-tRNA synthetase family. It depends on Zn(2+) as a cofactor.

The protein localises to the cytoplasm. The enzyme catalyses tRNA(Ala) + L-alanine + ATP = L-alanyl-tRNA(Ala) + AMP + diphosphate. Functionally, catalyzes the attachment of alanine to tRNA(Ala) in a two-step reaction: alanine is first activated by ATP to form Ala-AMP and then transferred to the acceptor end of tRNA(Ala). Also edits incorrectly charged Ser-tRNA(Ala) and Gly-tRNA(Ala) via its editing domain. The protein is Alanine--tRNA ligase of Chelativorans sp. (strain BNC1).